The following is a 537-amino-acid chain: Extracellular exo-inulinase inuE (537 aa).

The N-terminal stretch at 1 to 19 (MARLLKAVTVCALAGIAHA) is a signal peptide. Residue Asp-41 is part of the active site. 8 N-linked (GlcNAc...) asparagine glycosylation sites follow: Asn-49, Asn-67, Asn-112, Asn-300, Asn-363, Asn-398, Asn-430, and Asn-531.

This sequence belongs to the glycosyl hydrolase 32 family.

The protein localises to the secreted. The catalysed reaction is Hydrolysis of terminal, non-reducing (2-&gt;1)- and (2-&gt;6)-linked beta-D-fructofuranose residues in fructans.. Functionally, exo-inulinase involved in utilization of the plant storage polymer inulin, consisting of fructooligosaccharides with a degree of polymerization (DP) value from 2 to 60. Splits off terminal fructose units successively from the non-reducing end of the inulin molecule, and also hydrolyze sucrose and raffinose. The polypeptide is Extracellular exo-inulinase inuE (inuE) (Aspergillus niger (strain ATCC MYA-4892 / CBS 513.88 / FGSC A1513)).